The primary structure comprises 1178 residues: DNA-directed RNA polymerase subunit beta' (1178 aa).

Residues Cys-60, Cys-62, Cys-75, and Cys-78 each contribute to the Zn(2+) site. 3 residues coordinate Mg(2+): Asp-450, Asp-452, and Asp-454. Positions 795, 869, 876, and 879 each coordinate Zn(2+).

Belongs to the RNA polymerase beta' chain family. In terms of assembly, the RNAP catalytic core consists of 2 alpha, 1 beta, 1 beta' and 1 omega subunit. When a sigma factor is associated with the core the holoenzyme is formed, which can initiate transcription. Mg(2+) is required as a cofactor. Zn(2+) serves as cofactor.

It catalyses the reaction RNA(n) + a ribonucleoside 5'-triphosphate = RNA(n+1) + diphosphate. In terms of biological role, DNA-dependent RNA polymerase catalyzes the transcription of DNA into RNA using the four ribonucleoside triphosphates as substrates. This Clostridium perfringens (strain ATCC 13124 / DSM 756 / JCM 1290 / NCIMB 6125 / NCTC 8237 / Type A) protein is DNA-directed RNA polymerase subunit beta'.